The sequence spans 240 residues: Protein unc-119 homolog A (240 aa).

The segment covering 1-12 (MKVKKGGGGAGT) has biased composition (gly residues). The tract at residues 1–61 (MKVKKGGGGA…GPLQRKQRIG (61 aa)) is disordered. Residues 13 to 23 (GAEPASGAPGP) show a composition bias toward low complexity. Phosphoserine; by CK2 occurs at positions 37, 39, and 41. Tyr131 lines the tetradecanoate pocket.

The protein belongs to the PDE6D/unc-119 family. In terms of assembly, interacts with CABP4; in the absence of calcium. May interact with GTP-bound ARL1. Interacts with ARL2 and ARL3 (GTP-bound forms); this promotes the release of myristoylated cargo proteins. Found in a complex with ARL3, RP2 and UNC119; RP2 induces hydrolysis of GTP ARL3 in the complex, leading to the release of UNC119. Interacts with NPHP3 (when myristoylated). Interacts with CYS1 (when myristoylated). Interacts with MACIR; interaction only takes place when UNC119 is not liganded with myristoylated proteins. Interacts with LCK; this interaction plays a crucial role in activation of LCK. Interacts with FYN. Interacts with RAB11A; in a cell cycle-dependent manner. Interacts with LYN (via SH2 and SH3 domains); leading to LYN activation. Interacts with DNM1; leading to a decrease of DNM1 GTPase activity. Found in a complex with ABL1, ABL2, CRK and UNC119; leading to the inhibition of CRK phosphorylation by ABL kinases. Interacts with CD44. Interacts with KLHL18 (via kelch repeats). Interacts with PPP3CA, PPP3CB and PPP3CC. Interacts with USP48; this interaction promotes UNC119 stability. Post-translationally, phosphorylation suppresses its interaction with KLHL18 and down-regulates its KLHL18-mediated degradation. Phosphorylated more under light conditions than dark conditions. Dephosphorylated by calcineurin.

It localises to the cytoplasm. Its subcellular location is the cytoskeleton. It is found in the microtubule organizing center. The protein localises to the centrosome. The protein resides in the spindle. It localises to the spindle pole. Involved in synaptic functions in photoreceptor cells, the signal transduction in immune cells as a Src family kinase activator, endosome recycling, the uptake of bacteria and endocytosis, protein trafficking in sensory neurons and as lipid-binding chaperone with specificity for a diverse subset of myristoylated proteins. Specifically binds the myristoyl moiety of a subset of N-terminally myristoylated proteins and is required for their localization. Binds myristoylated GNAT1 and is required for G-protein localization and trafficking in sensory neurons. Probably plays a role in trafficking proteins in photoreceptor cells. Plays important roles in mediating Src family kinase signals for the completion of cytokinesis via RAB11A. The polypeptide is Protein unc-119 homolog A (UNC119) (Canis lupus familiaris (Dog)).